Reading from the N-terminus, the 240-residue chain is RNA transcription, translation and transport factor protein (240 aa).

The protein belongs to the RTRAF family. Homodimer. Component of a tRNA-splicing ligase complex.

Its subcellular location is the nucleus. It localises to the cytoplasm. The protein resides in the cytosol. It is found in the perinuclear region. The protein localises to the cytoskeleton. Its subcellular location is the microtubule organizing center. It localises to the centrosome. RNA-binding protein involved in modulation of mRNA transcription by Polymerase II. Component of the tRNA-splicing ligase complex. The chain is RNA transcription, translation and transport factor protein from Xenopus laevis (African clawed frog).